The primary structure comprises 93 residues: Cobalt transport protein CbiN (93 aa).

2 consecutive transmembrane segments (helical) span residues 5 to 25 and 62 to 82; these read LILL…DHGG and SLLF…ILGY.

This sequence belongs to the CbiN family. Forms an energy-coupling factor (ECF) transporter complex composed of an ATP-binding protein (A component, CbiO), a transmembrane protein (T component, CbiQ) and 2 possible substrate-capture proteins (S components, CbiM and CbiN) of unknown stoichimetry.

The protein resides in the cell inner membrane. Its pathway is cofactor biosynthesis; adenosylcobalamin biosynthesis. In terms of biological role, part of the energy-coupling factor (ECF) transporter complex CbiMNOQ involved in cobalt import. This chain is Cobalt transport protein CbiN, found in Citrobacter koseri (strain ATCC BAA-895 / CDC 4225-83 / SGSC4696).